The chain runs to 519 residues: Keratin, type II cytoskeletal 1b (519 aa).

The head stretch occupies residues 1-166 (MSRQFSSQSA…DPEIQKIKTQ (166 aa)). Omega-N-methylarginine occurs at positions 81 and 95. The segment at 167–202 (EREQIKTLNNKFASFIDKVRFLEQQNQVLQTKWELL) is coil 1A. The IF rod domain maps to 167-480 (EREQIKTLNN…ELLEGEESRM (314 aa)). Residues 203-221 (QQVNTSTRTSSLEPIFEEF) are linker 1. Residues 222-313 (INQLQRQVDV…YLFDTELSQI (92 aa)) are coil 1B. The linker 12 stretch occupies residues 314 to 337 (QTHVSDTNVILSMDNNRSLDLDSI). Residues 338–476 (INAVRTQYEL…ATYRELLEGE (139 aa)) are coil 2. A tail region spans residues 477–519 (ESRMSGALQSQVSIWALPSNEGNDLGERLHDPQSQVPVPKLGC). The disordered stretch occupies residues 499 to 519 (NDLGERLHDPQSQVPVPKLGC).

Belongs to the intermediate filament family. Post-translationally, undergoes deimination of some arginine residues (citrullination).

This chain is Keratin, type II cytoskeletal 1b (Krt77), found in Rattus norvegicus (Rat).